The sequence spans 223 residues: Pyridoxine/pyridoxamine 5'-phosphate oxidase (223 aa).

Substrate-binding positions include 13–16 (RKNY) and lysine 73. FMN-binding positions include 68–73 (RIVLLK), 83–84 (YT), lysine 90, and glutamine 112. Positions 130, 134, and 138 each coordinate substrate. Residues 147–148 (QS) and tryptophan 193 contribute to the FMN site. 199–201 (RLH) lines the substrate pocket. Residue arginine 203 participates in FMN binding.

The protein belongs to the pyridoxamine 5'-phosphate oxidase family. In terms of assembly, homodimer. The cofactor is FMN.

It catalyses the reaction pyridoxamine 5'-phosphate + O2 + H2O = pyridoxal 5'-phosphate + H2O2 + NH4(+). The catalysed reaction is pyridoxine 5'-phosphate + O2 = pyridoxal 5'-phosphate + H2O2. It participates in cofactor metabolism; pyridoxal 5'-phosphate salvage; pyridoxal 5'-phosphate from pyridoxamine 5'-phosphate: step 1/1. The protein operates within cofactor metabolism; pyridoxal 5'-phosphate salvage; pyridoxal 5'-phosphate from pyridoxine 5'-phosphate: step 1/1. In terms of biological role, catalyzes the oxidation of either pyridoxine 5'-phosphate (PNP) or pyridoxamine 5'-phosphate (PMP) into pyridoxal 5'-phosphate (PLP). The chain is Pyridoxine/pyridoxamine 5'-phosphate oxidase from Rhodopirellula baltica (strain DSM 10527 / NCIMB 13988 / SH1).